Here is a 618-residue protein sequence, read N- to C-terminus: MKQSKLLIPTLREMPSDAQVISHALMVRAGYVRQVSAGIYAYLPLANRTIEKFKTIMREEFEKIGAVEMLAPALLTADLWRESGRYETYGEDLYKLKNRDNSDFILGPTHEETFTTLVRDAVKSYKQLPLNLYQIQSKYRDEKRPRNGLLRTREFIMKDGYSFHHNYEDLDVTYEDYRQAYEAIFTRAGLDFKGIIGDGGAMGGKDSQEFMAITPARTDLDRWVVLDKSIASMDDIPKEVLEEIKAELAAWMISGEDTIAYSTESSYAANLEMATNEYKPSSKVAAEDALAEVETPHCKTIDEVAAFLSVDETQTIKTLLFVADNEPVVALLVGNDHINTVKLKNYLAADFLEPASEEEARAFFGAGFGSLGPVNLAQGSRIVADRKVQNLTNAVAGANKDGFHVTGVNPGRDFQAEYVDIREVKEGEMSPDGHGVLQFARGIEVGHIFKLGTRYSDSMGATILDENGRAVPIVMGCYGIGVSRILSAVIEQHARLFVNKTPKGDYRYAWGVNFPKELAPFDVHLITVNVKDQVAQDLTAKLEADLTAKGYDVLTDDRNERVGSKFSDSDLIGLPIRVTVGKKAAEGIVEIKIKATGASIEVNAENLIETLEILTKEH.

This sequence belongs to the class-II aminoacyl-tRNA synthetase family. ProS type 1 subfamily. Homodimer.

The protein resides in the cytoplasm. The catalysed reaction is tRNA(Pro) + L-proline + ATP = L-prolyl-tRNA(Pro) + AMP + diphosphate. Catalyzes the attachment of proline to tRNA(Pro) in a two-step reaction: proline is first activated by ATP to form Pro-AMP and then transferred to the acceptor end of tRNA(Pro). As ProRS can inadvertently accommodate and process non-cognate amino acids such as alanine and cysteine, to avoid such errors it has two additional distinct editing activities against alanine. One activity is designated as 'pretransfer' editing and involves the tRNA(Pro)-independent hydrolysis of activated Ala-AMP. The other activity is designated 'posttransfer' editing and involves deacylation of mischarged Ala-tRNA(Pro). The misacylated Cys-tRNA(Pro) is not edited by ProRS. The chain is Proline--tRNA ligase from Streptococcus pyogenes serotype M12 (strain MGAS2096).